Consider the following 632-residue polypeptide: 1-deoxy-D-xylulose-5-phosphate synthase (632 aa).

Residues H77 and 118-120 (GHA) each bind thiamine diphosphate. Residue D149 coordinates Mg(2+). Residues 150-151 (GS), N178, F287, and E372 contribute to the thiamine diphosphate site. N178 is a Mg(2+) binding site.

Belongs to the transketolase family. DXPS subfamily. Homodimer. The cofactor is Mg(2+). It depends on thiamine diphosphate as a cofactor.

The enzyme catalyses D-glyceraldehyde 3-phosphate + pyruvate + H(+) = 1-deoxy-D-xylulose 5-phosphate + CO2. Its pathway is metabolic intermediate biosynthesis; 1-deoxy-D-xylulose 5-phosphate biosynthesis; 1-deoxy-D-xylulose 5-phosphate from D-glyceraldehyde 3-phosphate and pyruvate: step 1/1. Catalyzes the acyloin condensation reaction between C atoms 2 and 3 of pyruvate and glyceraldehyde 3-phosphate to yield 1-deoxy-D-xylulose-5-phosphate (DXP). The polypeptide is 1-deoxy-D-xylulose-5-phosphate synthase (Chlorobium luteolum (strain DSM 273 / BCRC 81028 / 2530) (Pelodictyon luteolum)).